We begin with the raw amino-acid sequence, 683 residues long: Phenoloxidase 3 (683 aa).

The propeptide occupies 1–48 (MADKKNLLLLFDHPTEPVFMDKGGNGTVFDVPASYVTDRYNKMCKKVQ). A glycan (N-linked (GlcNAc...) asparagine) is linked at Asn-25. 3 residues coordinate Cu cation: His-209, His-213, and His-239. The active-site Proton acceptor is the Glu-351. Residue Asn-358 is glycosylated (N-linked (GlcNAc...) asparagine). Cu cation-binding residues include His-366, His-370, and His-406. Asn-492 and Asn-514 each carry an N-linked (GlcNAc...) asparagine glycan. 2 disulfide bridges follow: Cys-574–Cys-617 and Cys-576–Cys-624.

It belongs to the tyrosinase family. Requires Cu(2+) as cofactor. In terms of processing, upon activation, a trypsin type protease cleaves prophenol oxidase to yield the active enzyme.

It is found in the secreted. It catalyses the reaction 2 L-dopa + O2 = 2 L-dopaquinone + 2 H2O. The enzyme catalyses L-tyrosine + O2 = L-dopaquinone + H2O. Its function is as follows. This is a copper-containing oxidase that functions in the formation of pigments such as melanins and other polyphenolic compounds. Catalyzes the rate-limiting conversions of tyrosine to DOPA, DOPA to DOPA-quinone and possibly 5,6 dihydroxyindole to indole-5'6 quinone. This is Phenoloxidase 3 (PPO3) from Drosophila erecta (Fruit fly).